We begin with the raw amino-acid sequence, 1469 residues long: snRNA-activating protein complex subunit 4 (1469 aa).

The disordered stretch occupies residues 16 to 82 (ELERILDPGS…DPKDKTLPED (67 aa)). The segment covering 24 to 36 (GSSGSHVEISESS) has biased composition (low complexity). The span at 37–53 (LESDSEADSLPSEDLDP) shows a compositional bias: acidic residues. Ser-68 is modified (phosphoserine). The interval 84-133 (ETCLQLNMVYQEVIQEKLAEANLLLAQNREQQEELMRDLAGSKGTKVKDG) is SNAPC5-binding. One can recognise a Myb-like 1 domain in the interval 250–288 (EEALLGNRLDSHDWEKISNINFEGSRSAEEIRKFWQNSE). Residues 289-343 (HPSINKQEWSREEEERLQAIAAAHGHLEWQKIAEELGTSRSAFQCLQKFQQHNKA) form the HTH myb-type 1 domain. The H-T-H motif DNA-binding region spans 317-341 (WQKIAEELGTSRSAFQCLQKFQQHN). Residues 344–395 (LKRKEWTEEEDRMLTQLVQEMRVGSHIPYRRIVYYMEGRDSMQLIYRWTKSL) form the Myb-like 2 domain. HTH myb-type domains lie at 396-451 (DPGL…HFSL) and 452-503 (KKGR…GKKQ). 2 consecutive DNA-binding regions (H-T-H motif) follow at residues 424–447 (WFKIREEVPGRSDAQCRDRYLRRL) and 476–499 (WAKIASELPHRSGSQCLSKWKIMM). Disordered regions lie at residues 501 to 558 (KKQG…GDRA), 577 to 661 (QSTS…QALE), 685 to 710 (RSCTQKEQLRQPPLPTSSPGVSSGDS), 834 to 894 (ASSS…KTVS), 932 to 981 (PLPH…DKRL), 1001 to 1051 (PAAS…PSPT), 1121 to 1167 (AAQG…PAEA), and 1184 to 1266 (IPEP…GPEK). The segment covering 503–516 (QGLRRRRRRARHSV) has biased composition (basic residues). Residues 519–541 (SSTSSSGSSSGSSGGSSSSSSSS) show a composition bias toward low complexity. Ser-599 bears the Phosphoserine mark. Residues 602–618 (KGSSASQGGSKEASTTA) show a composition bias toward polar residues. Ser-626 carries the post-translational modification Phosphoserine. The segment covering 932 to 944 (PLPHTPHGRPAPG) has biased composition (pro residues). The segment covering 951–968 (PLSGPGAPAAAKPGTSGS) has biased composition (low complexity). A compositionally biased stretch (polar residues) spans 1014 to 1029 (ISVSCPESGLGQSQAP). A compositionally biased stretch (pro residues) spans 1039–1051 (EAPPFLPAAPSPT). Position 1157 is a phosphothreonine (Thr-1157). The span at 1184–1195 (IPEPRTSSHADP) shows a compositional bias: basic and acidic residues. Phosphoserine is present on Ser-1224. The SNAPC2-binding stretch occupies residues 1281–1393 (ATQQWLGGQR…QGVRTTLSVP (113 aa)). 3 positions are modified to phosphoserine: Ser-1398, Ser-1400, and Ser-1440. A disordered region spans residues 1430-1449 (APDSGKCSASSCLDTSNDPD). The segment covering 1436-1445 (CSASSCLDTS) has biased composition (polar residues).

Part of the SNAPc complex composed of 5 subunits: SNAPC1, SNAPC2, SNAPC3, SNAPC4 and SNAPC5. SNAPC4 interacts with SNAPC1, SNAPC2, SNAPC5, BRF2 and TBP.

The protein localises to the nucleus. Functionally, part of the SNAPc complex required for the transcription of both RNA polymerase II and III small-nuclear RNA genes. Binds to the proximal sequence element (PSE), a non-TATA-box basal promoter element common to these 2 types of genes. Recruits TBP and BRF2 to the U6 snRNA TATA box. The polypeptide is snRNA-activating protein complex subunit 4 (Homo sapiens (Human)).